The chain runs to 331 residues: MTIIVTGAAGFIGSNLVKGLNDRGETNVIAVDNLTRADKFHNLVDCEISDYLDKQDFLARFARGEFGKVRAVFHEGACSDTMETDGRYMMENNYRYTLSLMESCLEQGTQFLYASSAATYGASQVFREDREFERPLNVYGYSKFLFDQIVRRRLPSALSQIVGFRYFNVYGPRETHKGRMASVAFHNFNQFRADGTVKLFGEYGGYAPGMQSRDFISVEDVVKVNLHFFDHPDKSGIFNLGTGRAQPFNDIAATVVNTLREAEGKPRLSLDELVQEGLLEYVKFPDALRGKYQCFTQSDVSKLRSAGYSEPFLSVEEGVARYCRWLIERAG.

NADP(+) is bound by residues 11–12 (FI), 32–33 (DN), Lys-39, Lys-54, 75–79 (EGACS), and Asn-92. Tyr-139 serves as the catalytic Proton acceptor. An NADP(+)-binding site is contributed by Lys-143. Substrate is bound at residue Asn-168. NADP(+)-binding residues include Val-169 and Lys-177. The active-site Proton acceptor is Lys-177. Substrate contacts are provided by residues Arg-179, His-186, 200 to 203 (FGEY), Arg-213, and Tyr-292.

This sequence belongs to the NAD(P)-dependent epimerase/dehydratase family. HldD subfamily. As to quaternary structure, homopentamer. Requires NADP(+) as cofactor.

The enzyme catalyses ADP-D-glycero-beta-D-manno-heptose = ADP-L-glycero-beta-D-manno-heptose. Its pathway is nucleotide-sugar biosynthesis; ADP-L-glycero-beta-D-manno-heptose biosynthesis; ADP-L-glycero-beta-D-manno-heptose from D-glycero-beta-D-manno-heptose 7-phosphate: step 4/4. Its function is as follows. Catalyzes the interconversion between ADP-D-glycero-beta-D-manno-heptose and ADP-L-glycero-beta-D-manno-heptose via an epimerization at carbon 6 of the heptose. The chain is ADP-L-glycero-D-manno-heptose-6-epimerase from Cupriavidus necator (strain ATCC 17699 / DSM 428 / KCTC 22496 / NCIMB 10442 / H16 / Stanier 337) (Ralstonia eutropha).